Reading from the N-terminus, the 628-residue chain is MPCVQAQYSPSPPGSTYATQTYGSEYTTEIMNPDYAKLTMDLGSTGIMATATTSLPSFSTFMEGYPSSCELKPSCLYQMPPSGPRPLIKMEEGREHGYHHHHHHHHHHHHHHQQQQPSIPPPSGPEDEVLPSTSMYFKQSPPSTPTTPGFPPQAGALWDDELPSAPGCIAPGPLLDPQMKAVPPMAAAARFPIFFKPSPPHPPAPSPAGGHHLGYDPTAAAALSLPLGAAAAAGSQAAALEGHPYGLPLAKRTATLTFPPLGLTASPTASSLLGESPSLPSPPNRSSSSGEGTCAVCGDNAACQHYGVRTCEGCKGFFKRTVQKNAKYVCLANKNCPVDKRRRNRCQYCRFQKCLSVGMVKEVVRTDSLKGRRGRLPSKPKSPLQQEPSQPSPPSPPICMMNALVRALTDATPRDLDYSRYCPTDQATAGTDAEHVQQFYNLLTASIDVSRSWAEKIPGFTDLPKEDQTLLIESAFLELFVLRLSIRSNTAEDKFVFCNGLVLHRLQCLRGFGEWLDSIKDFSLNLQSLNLDIQALACLSALSMITERHGLKEPKRVEELCNKITSSLKDHQRKGQALEPSEPKVLRALVELRKICTQGLQRIFYLKLEDLVSPPSVIDKLFLDTLPF.

Residues 1 to 112 form an activation function (AF)-1 domain region; sequence MPCVQAQYSP…HHHHHHHHHH (112 aa). The required for DNA-PK heterotrimer stretch occupies residues 1–140; that stretch reads MPCVQAQYSP…PSTSMYFKQS (140 aa). The interval 1–293 is interaction with NCOA1, NCOA2, NCOA3 and KAT2B; sequence MPCVQAQYSP…NRSSSSGEGT (293 aa). 2 disordered regions span residues 96–163 and 269–290; these read HGYH…DELP and ASSL…SSSG. Basic residues predominate over residues 97 to 113; that stretch reads GYHHHHHHHHHHHHHHQ. Residues 142 to 151 show a composition bias toward pro residues; the sequence is PSTPTTPGFP. The span at 270–289 shows a compositional bias: low complexity; the sequence is SSLLGESPSLPSPPNRSSSS. The segment at residues 291-366 is a DNA-binding region (nuclear receptor); sequence EGTCAVCGDN…VGMVKEVVRT (76 aa). NR C4-type zinc fingers lie at residues 294-314 and 330-354; these read CAVC…CEGC and CLAN…FQKC. The tract at residues 366–396 is disordered; that stretch reads TDSLKGRRGRLPSKPKSPLQQEPSQPSPPSP. A compositionally biased stretch (low complexity) spans 379–389; it reads KPKSPLQQEPS. Residues 381 to 628 form an interaction with KAT2B region; that stretch reads KSPLQQEPSQ…DKLFLDTLPF (248 aa). The region spanning 396–625 is the NR LBD domain; the sequence is PPICMMNALV…SVIDKLFLDT (230 aa).

This sequence belongs to the nuclear hormone receptor family. NR4 subfamily. As to quaternary structure, interacts with SIX3 (via homeobox); differentially regulates the transcriptional activities of NR4A3. Interacts with NR3C1 (via nuclear receptor DNA-binding domain); the interactions represses transcription activity of NR4A3 on the POMC promoter Nur response element (NurRE). Interacts with TRIM28; the interactions potentiates NR4A3 activity on NurRE promoter. Binds DNA as a monomer and homodimer. Interacts with PARP1; activates PARP1 by improving acetylation of PARP1 and suppressing the interaction between PARP1 and SIRT1. Interacts with the constituents of DNA-PK heterotrimer PRKDC, XRCC6 and XRCC5; phosphorylates and prevents NR4A3 ubiquitinylation and degradation. Interacts with NCOA2; potentiates the activity of the NR4A3. Interacts with NCOA1, NCOA3, MED1 and KAT2B. Interacts with EP300 and NCOA2; mediates the recruitment of MED1 in the coactivator complex. Phosphorylated by PRKDC. Expressed at high levels in cultured apoptotic neuronal cells and fetal brain, and at low level in adult brain.

It localises to the nucleus. Its function is as follows. Transcriptional activator that binds to regulatory elements in promoter regions in a cell- and response element (target)-specific manner. Induces gene expression by binding as monomers to the NR4A1 response element (NBRE) 5'-AAAAGGTCA-3' site and as homodimers to the Nur response element (NurRE) site in the promoter of their regulated target genes. Plays a role in the regulation of proliferation, survival and differentiation of many different cell types and also in metabolism and inflammation. Mediates proliferation of vascular smooth muscle, myeloid progenitor cell and type B pancreatic cells; promotes mitogen-induced vascular smooth muscle cell proliferation through transactivation of SKP2 promoter by binding a NBRE site. Upon PDGF stimulation, stimulates vascular smooth muscle cell proliferation by regulating CCND1 and CCND2 expression. In islets, induces type B pancreatic cell proliferation through up-regulation of genes that activate cell cycle, as well as genes that cause degradation of the CDKN1A. Negatively regulates myeloid progenitor cell proliferation by repressing RUNX1 in a NBRE site-independent manner. During inner ear, plays a role as a key mediator of the proliferative growth phase of semicircular canal development. Also mediates survival of neuron and smooth muscle cells; mediates CREB-induced neuronal survival, and during hippocampus development, plays a critical role in pyramidal cell survival and axonal guidance. Is required for S phase entry of the cell cycle and survival of smooth muscle cells by inducing CCND1, resulting in RB1 phosphorylation. Binds to NBRE motif in CCND1 promoter, resulting in the activation of the promoter and CCND1 transcription. Also plays a role in inflammation; Upon TNF stimulation, mediates monocyte adhesion by inducing the expression of VCAM1 and ICAM1 by binding to the NBRE consensus site. In mast cells activated by Fc-epsilon receptor cross-linking, promotes the synthesis and release of cytokines but impairs events leading to degranulation. Also plays a role in metabolism; by modulating feeding behavior; and by playing a role in energy balance by inhibiting the glucocorticoid-induced orexigenic neuropeptides AGRP expression, at least in part by forming a complex with activated NR3C1 on the AGRP-glucocorticoid response element (GRE), and thus weakening the DNA binding activity of NR3C1. Upon catecholamines stimulation, regulates gene expression that controls oxidative metabolism in skeletal muscle. Plays a role in glucose transport by regulating translocation of the SLC2A4 glucose transporter to the cell surface. Finally, during gastrulation plays a crucial role in the formation of anterior mesoderm by controlling cell migration. Also participates in cardiac hypertrophy by activating PARP1. This chain is Nuclear receptor subfamily 4 group A member 3 (Nr4a3), found in Rattus norvegicus (Rat).